Consider the following 77-residue polypeptide: Large ribosomal subunit protein eL13 (77 aa).

The protein belongs to the eukaryotic ribosomal protein eL13 family.

The chain is Large ribosomal subunit protein eL13 from Sulfurisphaera tokodaii (strain DSM 16993 / JCM 10545 / NBRC 100140 / 7) (Sulfolobus tokodaii).